The following is an 84-amino-acid chain: Large ribosomal subunit protein bL28 (84 aa).

This sequence belongs to the bacterial ribosomal protein bL28 family.

In Deinococcus geothermalis (strain DSM 11300 / CIP 105573 / AG-3a), this protein is Large ribosomal subunit protein bL28.